Here is a 358-residue protein sequence, read N- to C-terminus: Photosystem II protein D1 1 (358 aa).

3 helical membrane-spanning segments follow: residues 28-45 (YVGW…AATI), 117-132 (HFLI…QWEL), and 141-155 (WICV…AAFA). Position 117 (H117) interacts with chlorophyll a. Position 125 (Y125) interacts with pheophytin a. [CaMn4O5] cluster contacts are provided by D169 and E188. Residues 196–217 (FHMLGVAGVFGGSLFSAMHGSL) traverse the membrane as a helical segment. Position 197 (H197) interacts with chlorophyll a. Residues H214 and 263–264 (SF) contribute to the a quinone site. H214 lines the Fe cation pocket. Position 271 (H271) interacts with Fe cation. The chain crosses the membrane as a helical span at residues 273 to 287 (FLGAWPVIGIWFTSM). [CaMn4O5] cluster-binding residues include H331, E332, D341, and A343. Positions 344 to 358 (AAESTPVALQAPAIG) are excised as a propeptide.

It belongs to the reaction center PufL/M/PsbA/D family. In terms of assembly, PSII is composed of 1 copy each of membrane proteins PsbA, PsbB, PsbC, PsbD, PsbE, PsbF, PsbH, PsbI, PsbJ, PsbK, PsbL, PsbM, PsbT, PsbX, PsbY, PsbZ, Psb30/Ycf12, peripheral proteins PsbO, CyanoQ (PsbQ), PsbU, PsbV and a large number of cofactors. It forms dimeric complexes. The D1/D2 heterodimer binds P680, chlorophylls that are the primary electron donor of PSII, and subsequent electron acceptors. It shares a non-heme iron and each subunit binds pheophytin, quinone, additional chlorophylls, carotenoids and lipids. D1 provides most of the ligands for the Mn4-Ca-O5 cluster of the oxygen-evolving complex (OEC). There is also a Cl(-1) ion associated with D1 and D2, which is required for oxygen evolution. The PSII complex binds additional chlorophylls, carotenoids and specific lipids. is required as a cofactor. Tyr-160 forms a radical intermediate that is referred to as redox-active TyrZ, YZ or Y-Z. Post-translationally, C-terminally processed by CtpA; processing is essential to allow assembly of the oxygen-evolving complex and thus photosynthetic growth.

Its subcellular location is the cellular thylakoid membrane. It catalyses the reaction 2 a plastoquinone + 4 hnu + 2 H2O = 2 a plastoquinol + O2. In terms of biological role, photosystem II (PSII) is a light-driven water:plastoquinone oxidoreductase that uses light energy to abstract electrons from H(2)O, generating O(2) and a proton gradient subsequently used for ATP formation. It consists of a core antenna complex that captures photons, and an electron transfer chain that converts photonic excitation into a charge separation. The D1/D2 (PsbA/PsbD) reaction center heterodimer binds P680, the primary electron donor of PSII as well as several subsequent electron acceptors. In Synechococcus sp. (strain CC9902), this protein is Photosystem II protein D1 1.